Consider the following 355-residue polypeptide: Peptide chain release factor 1 (355 aa).

An N5-methylglutamine modification is found at Gln-233. Residues 280 to 293 (ERRKKEQERADSRR) show a composition bias toward basic and acidic residues. The interval 280 to 308 (ERRKKEQERADSRRGQVGSGDRSERIRTY) is disordered.

Belongs to the prokaryotic/mitochondrial release factor family. Methylated by PrmC. Methylation increases the termination efficiency of RF1.

The protein localises to the cytoplasm. Peptide chain release factor 1 directs the termination of translation in response to the peptide chain termination codons UAG and UAA. In Rickettsia peacockii (strain Rustic), this protein is Peptide chain release factor 1.